Reading from the N-terminus, the 192-residue chain is GTP cyclohydrolase 1 (192 aa).

Residues Cys81, His84, and Cys153 each coordinate Zn(2+).

It belongs to the GTP cyclohydrolase I family. Toroid-shaped homodecamer, composed of two pentamers of five dimers.

The catalysed reaction is GTP + H2O = 7,8-dihydroneopterin 3'-triphosphate + formate + H(+). The protein operates within cofactor biosynthesis; 7,8-dihydroneopterin triphosphate biosynthesis; 7,8-dihydroneopterin triphosphate from GTP: step 1/1. The polypeptide is GTP cyclohydrolase 1 (Streptococcus mutans serotype c (strain ATCC 700610 / UA159)).